A 127-amino-acid chain; its full sequence is Histone H2B.2 (127 aa).

The disordered stretch occupies residues 1–35 (MAPKAEKKPASKAPAAKKTTASTDASKKRTKTRKE). N6-acetyllysine; alternate is present on residues Lys7 and Lys8. Residues Lys7 and Lys8 each participate in a glycyl lysine isopeptide (Lys-Gly) (interchain with G-Cter in SUMO); alternate cross-link. Phosphoserine is present on Ser11. The span at 11-24 (SKAPAAKKTTASTD) shows a compositional bias: low complexity. Residue Lys12 is modified to N6-acetyllysine. Lys120 is covalently cross-linked (Glycyl lysine isopeptide (Lys-Gly) (interchain with G-Cter in ubiquitin)).

The protein belongs to the histone H2B family. As to quaternary structure, the nucleosome is a histone octamer containing two molecules each of H2A, H2B, H3 and H4 assembled in one H3-H4 heterotetramer and two H2A-H2B heterodimers. The octamer wraps approximately 147 bp of DNA. In terms of processing, monoubiquitinated by the UBC2-BRE1 complex to form H2BK123ub1. H2BK123ub1 gives a specific tag for epigenetic transcriptional activation and is also prerequisite for H3K4me and H3K79me formation. H2BK123ub1 also modulates the formation of double-strand breaks during meiosis and is a prerequisite for DNA-damage checkpoint activation. Post-translationally, phosphorylated by STE20 to form H2BS10ph during progression through meiotic prophase. May be correlated with chromosome condensation. Acetylation of N-terminal lysines and particularly formation of H2BK11ac has a positive effect on transcription. In terms of processing, sumoylation to form H2BK6su or H2BK7su occurs preferentially near the telomeres and represses gene transcription.

It is found in the nucleus. It localises to the chromosome. Functionally, core component of nucleosome. Nucleosomes wrap and compact DNA into chromatin, limiting DNA accessibility to the cellular machineries which require DNA as a template. Histones thereby play a central role in transcription regulation, DNA repair, DNA replication and chromosomal stability. DNA accessibility is regulated via a complex set of post-translational modifications of histones, also called histone code, and nucleosome remodeling. The polypeptide is Histone H2B.2 (HTB2) (Eremothecium gossypii (strain ATCC 10895 / CBS 109.51 / FGSC 9923 / NRRL Y-1056) (Yeast)).